Here is a 328-residue protein sequence, read N- to C-terminus: Neuronal membrane glycoprotein M6-b (328 aa).

The tract at residues 1-22 (MKPAMETAAEENTEQSQERKVN) is disordered. The chain crosses the membrane as a helical span at residues 71-91 (GGVPYASLVATILCFSGVALF). Residue Asn-113 is glycosylated (N-linked (GlcNAc...) asparagine). 2 consecutive transmembrane segments (helical) span residues 130–150 (VIYG…AEGF) and 176–196 (FVFL…FSAV). Asn-217 is a glycosylation site (N-linked (GlcNAc...) asparagine). The chain crosses the membrane as a helical span at residues 265–285 (FIVACAGAGATVIALIHFLMI). Phosphoserine is present on residues Ser-318, Ser-320, and Ser-326.

The protein belongs to the myelin proteolipid protein family. As to quaternary structure, interacts with SERT. In terms of tissue distribution, widely expressed. In the brain, expressed in neurons and oligodendrocytes.

It localises to the membrane. Its subcellular location is the cell membrane. In terms of biological role, may be involved in neural development. Involved in regulation of osteoblast function and bone formation. Involved in matrix vesicle release by osteoblasts; this function seems to involve maintenance of the actin cytoskeleton. May be involved in cellular trafficking of SERT and thereby in regulation of serotonin uptake. The protein is Neuronal membrane glycoprotein M6-b (Gpm6b) of Mus musculus (Mouse).